A 212-amino-acid chain; its full sequence is Pyrrolidone-carboxylate peptidase (212 aa).

Active-site residues include E78, C141, and H165.

This sequence belongs to the peptidase C15 family. As to quaternary structure, homotetramer.

It is found in the cytoplasm. The catalysed reaction is Release of an N-terminal pyroglutamyl group from a polypeptide, the second amino acid generally not being Pro.. Functionally, removes 5-oxoproline from various penultimate amino acid residues except L-proline. The sequence is that of Pyrrolidone-carboxylate peptidase (pcp) from Staphylococcus aureus.